Here is a 97-residue protein sequence, read N- to C-terminus: UPF0235 protein DET1292 (97 aa).

Belongs to the UPF0235 family.

This Dehalococcoides mccartyi (strain ATCC BAA-2266 / KCTC 15142 / 195) (Dehalococcoides ethenogenes (strain 195)) protein is UPF0235 protein DET1292.